Here is a 280-residue protein sequence, read N- to C-terminus: Endochitinase A (280 aa).

A signal peptide spans 1-25 (MANAPRILALGLLALLCAAAGPAAA). A Chitin-binding type-1 domain is found at 26-60 (QNCGCQPNFCCSKFGYCGTTDAYCGDGCQSGPCRS). Cystine bridges form between cysteine 28/cysteine 36, cysteine 30/cysteine 42, cysteine 35/cysteine 49, and cysteine 53/cysteine 58. Residues 61–77 (GGGGGGGGGGGGGGSGG) are hinge region (poly-Gly). The interval 78–280 (ANVANVVTDA…RVDPGPNLTC (203 aa)) is catalytic. Cysteine 100 and cysteine 149 form a disulfide bridge. Glutamate 144 serves as the catalytic Proton donor. N-linked (GlcNAc...) asparagine glycosylation occurs at asparagine 155. Disulfide bonds link cysteine 161–cysteine 170 and cysteine 248–cysteine 280. N-linked (GlcNAc...) asparagine glycosylation occurs at asparagine 277.

This sequence belongs to the glycosyl hydrolase 19 family. Chitinase class IV subfamily.

It is found in the secreted. It catalyses the reaction Random endo-hydrolysis of N-acetyl-beta-D-glucosaminide (1-&gt;4)-beta-linkages in chitin and chitodextrins.. With respect to regulation, inactivated by l-ethyl-3-(3-dimethylaminopropyl)carbodiimide (EDC) in the absence of exogenous nucleophiles (e.g. GlcNAc4, GlcNAc3 and GlcNAc2). Not inhibited by tetra-N-acetylchitopentaose or modified chitotetraose substrate TMG-chitotriomycin-pMP, containing a free, non-acetylated glucosaminyl residue or a N-trimethylamino glucosamine (TMG) residue at the non-reducing terminus, respectively. In terms of biological role, defense against chitin-containing fungal pathogens. Hydrolyzes glycol chitin and tetra-N-acetylchitotetraose in vitro. Its action is countered by fungal polyglycine hydrolases and fungalysin, that cleave the chitin-binding domain from the protein. This Zea mays (Maize) protein is Endochitinase A.